Consider the following 959-residue polypeptide: Translation initiation factor IF-2 (959 aa).

The segment covering 1–10 (MSDKTNDDKT) has biased composition (basic and acidic residues). The segment at 1–374 (MSDKTNDDKT…SQMQETREKI (374 aa)) is disordered. Polar residues predominate over residues 27–37 (EQSTVRQNFSH). 2 stretches are compositionally biased toward low complexity: residues 63–118 (AAAA…VTKP) and 128–138 (QRPGGQQAQRP). Basic and acidic residues-rich tracts occupy residues 154-225 (SEMD…EAAK) and 232-241 (ARSERRDDAR). Positions 246–284 (GARPQQAGRPQGGRPQPAGRPQQGSPRPAPIIADAAPIA) are enriched in low complexity. Basic and acidic residues predominate over residues 318 to 333 (PEVRAPKVVKGEDDRR). In terms of domain architecture, tr-type G spans 457–626 (SRPPVVTIMG…LLQAEMLDLK (170 aa)). The segment at 466–473 (GHVDHGKT) is G1. GTP is bound at residue 466–473 (GHVDHGKT). Residues 491–495 (GITQH) are G2. A G3 region spans residues 512 to 515 (DTPG). GTP contacts are provided by residues 512–516 (DTPGH) and 566–569 (NKID). Positions 566-569 (NKID) are G4. Positions 602–604 (SAK) are G5.

This sequence belongs to the TRAFAC class translation factor GTPase superfamily. Classic translation factor GTPase family. IF-2 subfamily.

It is found in the cytoplasm. Functionally, one of the essential components for the initiation of protein synthesis. Protects formylmethionyl-tRNA from spontaneous hydrolysis and promotes its binding to the 30S ribosomal subunits. Also involved in the hydrolysis of GTP during the formation of the 70S ribosomal complex. The polypeptide is Translation initiation factor IF-2 (Brucella melitensis biotype 1 (strain ATCC 23456 / CCUG 17765 / NCTC 10094 / 16M)).